The chain runs to 374 residues: Histidinol-phosphate aminotransferase (374 aa).

Lysine 215 carries the post-translational modification N6-(pyridoxal phosphate)lysine.

The protein belongs to the class-II pyridoxal-phosphate-dependent aminotransferase family. Histidinol-phosphate aminotransferase subfamily. As to quaternary structure, homodimer. Requires pyridoxal 5'-phosphate as cofactor.

The enzyme catalyses L-histidinol phosphate + 2-oxoglutarate = 3-(imidazol-4-yl)-2-oxopropyl phosphate + L-glutamate. It functions in the pathway amino-acid biosynthesis; L-histidine biosynthesis; L-histidine from 5-phospho-alpha-D-ribose 1-diphosphate: step 7/9. The protein is Histidinol-phosphate aminotransferase of Yersinia enterocolitica serotype O:8 / biotype 1B (strain NCTC 13174 / 8081).